Reading from the N-terminus, the 193-residue chain is Orotate phosphoribosyltransferase (193 aa).

5-phospho-alpha-D-ribose 1-diphosphate is bound by residues arginine 107, lysine 108, lysine 111, histidine 113, and glutamate 133–serine 141. The orotate site is built by threonine 137 and arginine 165.

The protein belongs to the purine/pyrimidine phosphoribosyltransferase family. PyrE subfamily. Homodimer. Requires Mg(2+) as cofactor.

It catalyses the reaction orotidine 5'-phosphate + diphosphate = orotate + 5-phospho-alpha-D-ribose 1-diphosphate. The protein operates within pyrimidine metabolism; UMP biosynthesis via de novo pathway; UMP from orotate: step 1/2. In terms of biological role, catalyzes the transfer of a ribosyl phosphate group from 5-phosphoribose 1-diphosphate to orotate, leading to the formation of orotidine monophosphate (OMP). In Rhodopirellula baltica (strain DSM 10527 / NCIMB 13988 / SH1), this protein is Orotate phosphoribosyltransferase.